The sequence spans 72 residues: MSRRKVCRFTVEGVKEIDYKDVNKLKAYINETGKIVPSRVTGTSAKYQRQLATAIKRARFLALLPYCDRHFN.

The protein belongs to the bacterial ribosomal protein bS18 family. Part of the 30S ribosomal subunit. Forms a tight heterodimer with protein bS6.

Functionally, binds as a heterodimer with protein bS6 to the central domain of the 16S rRNA, where it helps stabilize the platform of the 30S subunit. This Francisella tularensis subsp. holarctica (strain OSU18) protein is Small ribosomal subunit protein bS18.